Reading from the N-terminus, the 405-residue chain is Octaketide synthase 3 (405 aa).

The span at 1-10 (MGSIAESSPL) shows a compositional bias: polar residues. Residues 1-22 (MGSIAESSPLMSRENVEGIRKA) are disordered. Cysteine 176 is an active-site residue. Residues serine 283 and 320 to 323 (GGRA) each bind CoA.

This sequence belongs to the thiolase-like superfamily. Chalcone/stilbene synthases family. As to quaternary structure, homodimer.

The protein operates within secondary metabolite biosynthesis; flavonoid biosynthesis. Its function is as follows. Catalyzes the iterative condensations of 8 molecules of malonyl-CoA to produce aromatic octaketides, SEK4 and SEK4b, the products of the minimal polyketide synthase for the benzoisochromanequinone actinorhodin. May be involved in the biosynthesis of the octaketide barbaloin. This chain is Octaketide synthase 3 (PKS5), found in Aloe arborescens (Kidachi aloe).